The primary structure comprises 169 residues: Sulfopyruvate decarboxylase subunit alpha (169 aa).

Belongs to the ComD family. In terms of assembly, heterododecamer composed of 6 subunits alpha and 6 subunits beta.

The catalysed reaction is 3-sulfopyruvate + H(+) = sulfoacetaldehyde + CO2. It functions in the pathway cofactor biosynthesis; coenzyme M biosynthesis; sulfoacetaldehyde from phosphoenolpyruvate and sulfite: step 4/4. Inhibited by oxygen when heated in air at 80 degrees Celsius. The enzyme is reactivated by addition of dithionite. In terms of biological role, involved in the biosynthesis of the coenzyme M (2-mercaptoethanesulfonic acid). Catalyzes the decarboxylation of sulfopyruvate to sulfoacetaldehyde. This Methanocaldococcus jannaschii (strain ATCC 43067 / DSM 2661 / JAL-1 / JCM 10045 / NBRC 100440) (Methanococcus jannaschii) protein is Sulfopyruvate decarboxylase subunit alpha.